A 120-amino-acid chain; its full sequence is Large ribosomal subunit protein uL18 (120 aa).

Over residues Met1–Arg10 the composition is skewed to basic and acidic residues. Residues Met1–Arg26 form a disordered region. Positions Ser11–Val20 are enriched in basic residues.

It belongs to the universal ribosomal protein uL18 family. Part of the 50S ribosomal subunit; part of the 5S rRNA/L5/L18/L25 subcomplex. Contacts the 5S and 23S rRNAs.

In terms of biological role, this is one of the proteins that bind and probably mediate the attachment of the 5S RNA into the large ribosomal subunit, where it forms part of the central protuberance. The chain is Large ribosomal subunit protein uL18 from Cyanothece sp. (strain PCC 7425 / ATCC 29141).